Consider the following 72-residue polypeptide: Bowman-Birk type trypsin inhibitor (72 aa).

7 cysteine pairs are disulfide-bonded: Cys-12–Cys-66, Cys-13–Cys-28, Cys-16–Cys-62, Cys-18–Cys-26, Cys-36–Cys-43, Cys-40–Cys-55, and Cys-45–Cys-53.

This sequence belongs to the Bowman-Birk serine protease inhibitor family.

The protein is Bowman-Birk type trypsin inhibitor of Vigna radiata var. radiata (Mung bean).